The sequence spans 373 residues: Sodium-dependent organic anion transporter (373 aa).

The span at 1–15 (MSTDCAGNSTCPVNS) shows a compositional bias: polar residues. The tract at residues 1–21 (MSTDCAGNSTCPVNSTEEDPP) is disordered. The Extracellular portion of the chain corresponds to 1–32 (MSTDCAGNSTCPVNSTEEDPPVGMEGHANLKL). N-linked (GlcNAc...) asparagine glycans are attached at residues N8 and N14. The helical transmembrane segment at 33-53 (LFTVLSAVMVGLVMFSFGCSV) threads the bilayer. The Cytoplasmic segment spans residues 54 to 67 (ESQKLWLHLRRPWG). A helical membrane pass occupies residues 68–88 (IAVGLLSQFGLMPLTAYLLAI). Over 89 to 97 (GFGLKPFQA) the chain is Extracellular. The chain crosses the membrane as a helical span at residues 98–118 (IAVLMMGSCPGGTISNVLTFW). The Cytoplasmic segment spans residues 119 to 126 (VDGDMDLS). A helical membrane pass occupies residues 127-147 (ISMTTCSTVAALGMMPLCLYI). Over 148–157 (YTRSWTLTQN) the chain is Extracellular. A helical transmembrane segment spans residues 158–178 (LVIPYQSIGITLVSLVVPVAS). Over 179–195 (GVYVNYRWPKQATVILK) the chain is Cytoplasmic. A helical membrane pass occupies residues 196-216 (VGAILGGMLLLVVAVTGMVLA). Residues 217-224 (KGWNTDVT) are Extracellular-facing. The chain crosses the membrane as a helical span at residues 225–245 (LLVISCIFPLVGHVTGFLLAF). Over 246 to 265 (LTHQSWQRCRTISIETGAQN) the chain is Cytoplasmic. The chain crosses the membrane as a helical span at residues 266–283 (IQLCIAMLQLSFSAEYLV). A topological domain (extracellular) is located at residue Q284. A helical membrane pass occupies residues 285 to 305 (LLNFALAYGLFQVLHGLLIVA). Over 306 to 373 (AYQAYKRRQK…ELTSHIPSCE (68 aa)) the chain is Cytoplasmic.

This sequence belongs to the bile acid:sodium symporter (BASS) (TC 2.A.28) family. Glycosylated. As to expression, highest expression in lung and testis, moderate expression in heart, bladder and skin, and low expression in blood, liver, stomach, small intestine, spleen, kidney, adrenal gland, seminal vesicle, preputial gland, coagulating gland, lacrimal gland/eye, and brain.

It localises to the membrane. It catalyses the reaction estrone 3-sulfate(out) + 2 Na(+)(out) = estrone 3-sulfate(in) + 2 Na(+)(in). The enzyme catalyses 17beta-estradiol 3-sulfate(out) + 2 Na(+)(out) = 17beta-estradiol 3-sulfate(in) + 2 Na(+)(in). The catalysed reaction is dehydroepiandrosterone 3-sulfate(out) + 2 Na(+)(out) = dehydroepiandrosterone 3-sulfate(in) + 2 Na(+)(in). It carries out the reaction androst-5-ene-diol 3-sulfate(out) + 2 Na(+)(out) = androst-5-ene-diol 3-sulfate(in) + 2 Na(+)(in). It catalyses the reaction pregnenolone sulfate(out) + 2 Na(+)(out) = pregnenolone sulfate(in) + 2 Na(+)(in). The enzyme catalyses taurolithocholate 3-sulfate(out) + 2 Na(+)(out) = taurolithocholate 3-sulfate(in) + 2 Na(+)(in). The catalysed reaction is androsterone 3alpha-sulfate(out) + 2 Na(+)(out) = androsterone 3alpha-sulfate(in) + 2 Na(+)(in). It carries out the reaction 5alpha-dihydrotestosterone sulfate(out) + 2 Na(+)(out) = 5alpha-dihydrotestosterone sulfate(in) + 2 Na(+)(in). It catalyses the reaction 17beta-estradiol 17-sulfate(out) + 2 Na(+)(out) = 17beta-estradiol 17-sulfate(in) + 2 Na(+)(in). The enzyme catalyses 17alpha-hydroxypregnenolone 3-sulfate(out) + 2 Na(+)(out) = 17alpha-hydroxypregnenolone 3-sulfate(in) + 2 Na(+)(in). The catalysed reaction is epiandrosterone 3-sulfate(out) + 2 Na(+)(out) = epiandrosterone 3-sulfate(in) + 2 Na(+)(in). It carries out the reaction epitestosterone 17-sulfate(out) + 2 Na(+)(out) = epitestosterone 17-sulfate(in) + 2 Na(+)(in). It catalyses the reaction testosterone 17-sulfate(out) + 2 Na(+)(out) = testosterone 17-sulfate(in) + 2 Na(+)(in). The enzyme catalyses 16alpha-hydroxydehydroepiandrosterone 3-sulfate(out) + 2 Na(+)(out) = 16alpha-hydroxydehydroepiandrosterone 3-sulfate(in) + 2 Na(+)(in). In terms of biological role, transports sulfoconjugated steroid hormones from the extracellular compartment into the cytosol in a sodium-dependent manner without hydrolysis. Steroid sulfate hormones are commonly considered to be biologically inactive metabolites, that may be activated by steroid sulfatases into free steroids. May play an important role by delivering sulfoconjugated steroids to specific target cells in reproductive organs. May play a role transporting the estriol precursor 16alpha-hydroxydehydroepiandrosterone 3-sulfate (16a-OH-DHEAS) at the fetal blood vessel endothelium. Can also transport other sulfoconjugated molecules such as taurolithocholic acid-3-sulfate and sulfoconjugated pyrenes. The protein is Sodium-dependent organic anion transporter (Slc10a6) of Mus musculus (Mouse).